The sequence spans 344 residues: Selenide, water dikinase (344 aa).

C16 is an active-site residue. ATP contacts are provided by residues K19 and S47–D49. D50 serves as a coordination point for Mg(2+). Residues D67, D90, and G138 to S140 contribute to the ATP site. D90 is a binding site for Mg(2+). Mg(2+) is bound at residue D226.

The protein belongs to the selenophosphate synthase 1 family. Class I subfamily. Homodimer. Mg(2+) is required as a cofactor.

The catalysed reaction is hydrogenselenide + ATP + H2O = selenophosphate + AMP + phosphate + 2 H(+). In terms of biological role, synthesizes selenophosphate from selenide and ATP. In Pseudomonas putida (strain ATCC 47054 / DSM 6125 / CFBP 8728 / NCIMB 11950 / KT2440), this protein is Selenide, water dikinase.